The sequence spans 440 residues: Gap junction gamma-2 protein (440 aa).

The Cytoplasmic portion of the chain corresponds to 1–21 (MTNMSWSFLTRLLEEIHNHST). The chain crosses the membrane as a helical span at residues 22–42 (FVGKVWLTVLVVFRIVLTAVG). The Extracellular portion of the chain corresponds to 43–78 (GESIYSDEQSKFTCNTRQPGCDNVCYDAFAPLSHVR). The helical transmembrane segment at 79–99 (FWVFQIVVISTPSVMYLGYAV) threads the bilayer. Topologically, residues 100–223 (HRLARASEQE…AQLVVRAAFE (124 aa)) are cytoplasmic. Residues 108–199 (QERRRALRRR…TPGPAGQHDG (92 aa)) are disordered. A compositionally biased stretch (basic residues) spans 112–124 (RALRRRPGPRRLP). Positions 150 to 173 (LEEDEDEEPGAPEGPGEDTEEERT) are enriched in acidic residues. The chain crosses the membrane as a helical span at residues 224–244 (VAFLVGQYLLYGFEVPPFFAC). The Extracellular portion of the chain corresponds to 245-264 (SRQPCPHVVDCFVSRPTEKT). The helical transmembrane segment at 265–285 (VFLLVMYVVSCLCLLLNLCEM) threads the bilayer. Residues 286–440 (AHLGLGSAQD…SRDGKATVWI (155 aa)) lie on the Cytoplasmic side of the membrane. The tract at residues 368 to 440 (ADRDSPPCSG…SRDGKATVWI (73 aa)) is disordered. Position 372 is a phosphoserine (S372). Residues 380–401 (ATSRGPPRAGGPASGTGSATSG) show a composition bias toward low complexity.

Belongs to the connexin family. Gamma-type subfamily. As to quaternary structure, a connexon is composed of a hexamer of connexins. Interacts with TJP1. In terms of tissue distribution, mainly expressed by oligodendrocytes in the central nervous system. Expressed in optic nerve (at protein level).

The protein resides in the cell membrane. Its subcellular location is the cell junction. It localises to the gap junction. Its function is as follows. One gap junction consists of a cluster of closely packed pairs of transmembrane channels, the connexons, through which materials of low MW diffuse from one cell to a neighboring cell. May play a role in myelination in central and peripheral nervous systems. In Rattus norvegicus (Rat), this protein is Gap junction gamma-2 protein (Gjc2).